The primary structure comprises 207 residues: TM2 domain-containing protein 1 (207 aa).

The N-terminal stretch at 1–37 (MAAAWPSGPSAPEAVTARLVGVLWFVSVTTGPWGAVA) is a signal peptide. Residues 40-128 (AGGEESLKCE…YSYKVAVALS (89 aa)) lie on the Extracellular side of the membrane. Asn72, Asn75, Asn87, and Asn96 each carry an N-linked (GlcNAc...) asparagine glycan. In terms of domain architecture, TM2 spans 118–166 (GYSYKVAVALSLFLGWLGADRFYLGYPALGLLKFCTVGFCGIGSLIDFI). Residues 129-149 (LFLGWLGADRFYLGYPALGLL) form a helical membrane-spanning segment. At 150 to 153 (KFCT) the chain is on the cytoplasmic side. Residues 154 to 174 (VGFCGIGSLIDFILISMQIVG) traverse the membrane as a helical segment. Topologically, residues 175-207 (PSDGSSYIIDYYGTRLTRLSITNETFRKTQLYP) are extracellular. Residue Asn197 is glycosylated (N-linked (GlcNAc...) asparagine).

The protein belongs to the TM2 family. Interacts with APP beta-APP42 (amyloid-beta protein 42). N-glycosylated. Widely expressed.

It localises to the membrane. In terms of biological role, may participate in amyloid-beta-induced apoptosis via its interaction with beta-APP42. The protein is TM2 domain-containing protein 1 (TM2D1) of Homo sapiens (Human).